Reading from the N-terminus, the 265-residue chain is Adenosylcobinamide-GDP ribazoletransferase (265 aa).

The next 5 helical transmembrane spans lie at 59–79, 113–133, 141–161, 183–203, and 206–226; these read LSWILPIEISIILGMILSVLI, IGTFGSIGLILSLGLKYLLLV, WIFLFTSWFSHSASRWFALLL, LPPFDFALSTFFGCFPAVYFL, and FQNQIPNVLLGFFLSSIFVFY.

Belongs to the CobS family. Requires Mg(2+) as cofactor.

The protein localises to the cell inner membrane. The catalysed reaction is alpha-ribazole + adenosylcob(III)inamide-GDP = adenosylcob(III)alamin + GMP + H(+). It carries out the reaction alpha-ribazole 5'-phosphate + adenosylcob(III)inamide-GDP = adenosylcob(III)alamin 5'-phosphate + GMP + H(+). It functions in the pathway cofactor biosynthesis; adenosylcobalamin biosynthesis; adenosylcobalamin from cob(II)yrinate a,c-diamide: step 7/7. Joins adenosylcobinamide-GDP and alpha-ribazole to generate adenosylcobalamin (Ado-cobalamin). Also synthesizes adenosylcobalamin 5'-phosphate from adenosylcobinamide-GDP and alpha-ribazole 5'-phosphate. This is Adenosylcobinamide-GDP ribazoletransferase from Leptospira interrogans serogroup Icterohaemorrhagiae serovar copenhageni (strain Fiocruz L1-130).